Reading from the N-terminus, the 364-residue chain is MVVNFKVFKKCSPNNMITLYMNRRDFVDSVTQVEPIDGIIVLDDEYVRQNRKIFVQLVCNFRYGREDDEMIGLRFQKELTLVSQQVCPPQKQDIQLTKMQERLLKKLGSNAYPFVMQMPPSSPASVVLQQKASDESQPCGVQYFVKIFTGDSDCDRSHRRSTINLGIRKVQYAPTKQGIQPCTVVRKDFLLSPGELELEVTLDKQLYHHGEKISVNICVRNNSNKVVKKIKAMVQQGVDVVLFQNGQFRNTIAFMETSEGCPLNPGSSLQKVMYLVPTLVANCDRAGIAVEGDIKRKDTALASTTLIASQDARDAFGIIVSYAVKVKLFLGALGGELCAELPFILMHPKPSRKAQLEAEGSIEA.

Belongs to the arrestin family. Post-translationally, phosphorylated, but does not undergo light-induced phosphorylation. As to expression, expressed specifically and abundantly in photoreceptor cells in retina and ocelli.

The protein localises to the cell projection. The protein resides in the rhabdomere. Regulates photoreceptor cell deactivation. Arr1 and Arr2 proteins are mediators of rhodopsin inactivation and are essential for the termination of the phototransduction cascade. Involved in regulating normal cycles of per nuclear accumulation in brain circadian neurons and thus is important for normal circadian behavior. In the dark, functions with Arr2 to promote the formation of cytosolic Bdbt foci, which are required for dco localization to photoreceptor nuclei where it phosphorylates and activates degradation of per. The sequence is that of Phosrestin-2 (Arr1) from Drosophila melanogaster (Fruit fly).